Reading from the N-terminus, the 152-residue chain is D-aminoacyl-tRNA deacylase (152 aa).

The Gly-cisPro motif, important for rejection of L-amino acids motif lies at 137-138 (GP).

It belongs to the DTD family. In terms of assembly, homodimer.

The protein localises to the cytoplasm. The catalysed reaction is glycyl-tRNA(Ala) + H2O = tRNA(Ala) + glycine + H(+). The enzyme catalyses a D-aminoacyl-tRNA + H2O = a tRNA + a D-alpha-amino acid + H(+). Functionally, an aminoacyl-tRNA editing enzyme that deacylates mischarged D-aminoacyl-tRNAs. Also deacylates mischarged glycyl-tRNA(Ala), protecting cells against glycine mischarging by AlaRS. Acts via tRNA-based rather than protein-based catalysis; rejects L-amino acids rather than detecting D-amino acids in the active site. By recycling D-aminoacyl-tRNA to D-amino acids and free tRNA molecules, this enzyme counteracts the toxicity associated with the formation of D-aminoacyl-tRNA entities in vivo and helps enforce protein L-homochirality. The chain is D-aminoacyl-tRNA deacylase from Geobacillus sp. (strain WCH70).